Here is a 229-residue protein sequence, read N- to C-terminus: Triosephosphate isomerase (229 aa).

6–8 is a binding site for substrate; it reads NFK. Residue H88 is the Electrophile of the active site. E157 acts as the Proton acceptor in catalysis. 2 residues coordinate substrate: G163 and S193.

It belongs to the triosephosphate isomerase family. Homodimer.

Its subcellular location is the cytoplasm. It carries out the reaction D-glyceraldehyde 3-phosphate = dihydroxyacetone phosphate. It participates in carbohydrate biosynthesis; gluconeogenesis. Its pathway is carbohydrate degradation; glycolysis; D-glyceraldehyde 3-phosphate from glycerone phosphate: step 1/1. In terms of biological role, involved in the gluconeogenesis. Catalyzes stereospecifically the conversion of dihydroxyacetone phosphate (DHAP) to D-glyceraldehyde-3-phosphate (G3P). This Sulfurovum sp. (strain NBC37-1) protein is Triosephosphate isomerase.